The following is a 413-amino-acid chain: MADWQEITGGITAPKGYRAAGITAGLKPSGLPDLALIVSDVEAIASGVFTTSQVKAACVDYCRQRLQAKQSARAILCNAGQANAATGSQGIKDAEESAELLAKELNISPELILLASTGVIGQRIKMDALRNGIPKLIASLTDTGSDAAAGAIITTDLVTKSIALETTIGDRPVRIGGIAKGSGMIHPNMATMLAFVTCDAAVSSHLWQQMLTRAADRSFNSITVDGDTSTNDSLIALANGQSRTPAITEVGAESEKLEAMLTAVCQHLAKAIARDGEGATCLIEVQVTGAHDEQAARQIAKTIAGSSLVKSAIFGRDPNWGRIAAAAGRAGVPFEQENLQIQLGDFLLLDNGQPLPFDRAAASAYLKQAATGAYLQQDTVLISVKVGNGHGTGKAWGCDLSYDYVKINAEYTT.

Substrate-binding residues include Thr154, Lys180, Thr191, Glu277, Asn408, and Thr413. Thr191 functions as the Nucleophile in the catalytic mechanism.

This sequence belongs to the ArgJ family. Heterotetramer of two alpha and two beta chains.

It localises to the cytoplasm. The catalysed reaction is N(2)-acetyl-L-ornithine + L-glutamate = N-acetyl-L-glutamate + L-ornithine. It carries out the reaction L-glutamate + acetyl-CoA = N-acetyl-L-glutamate + CoA + H(+). The protein operates within amino-acid biosynthesis; L-arginine biosynthesis; L-ornithine and N-acetyl-L-glutamate from L-glutamate and N(2)-acetyl-L-ornithine (cyclic): step 1/1. Its pathway is amino-acid biosynthesis; L-arginine biosynthesis; N(2)-acetyl-L-ornithine from L-glutamate: step 1/4. Its function is as follows. Catalyzes two activities which are involved in the cyclic version of arginine biosynthesis: the synthesis of N-acetylglutamate from glutamate and acetyl-CoA as the acetyl donor, and of ornithine by transacetylation between N(2)-acetylornithine and glutamate. In Nostoc sp. (strain PCC 7120 / SAG 25.82 / UTEX 2576), this protein is Arginine biosynthesis bifunctional protein ArgJ 1.